The sequence spans 210 residues: Mitochondrial import receptor subunit TOM20-2 (210 aa).

Methionine 1 bears the N-acetylmethionine mark. Residues 1-178 (MEFSTADFER…SSKKKKRNTE (178 aa)) lie on the Cytoplasmic side of the membrane. TPR repeat units lie at residues 42–75 (LLEL…NPGK) and 83–120 (ANAY…DPGN). The segment covering 151–161 (GGGGGGGGGGM) has biased composition (gly residues). A disordered region spans residues 151–172 (GGGGGGGGGGMASSNVSQSSKK). A helical transmembrane segment spans residues 179–199 (FTYDVCGWIILACGIVAWVGM). Topologically, residues 200–210 (AKSLGPPPPAR) are mitochondrial intermembrane.

Belongs to the Tom20 family. In terms of assembly, forms part of the preprotein translocase complex of the outer mitochondrial membrane (TOM complex) which consists of at least 6 different proteins (TOM5, TOM6, TOM7, TOM20, TOM22/TOM9 and TOM40). Component of a mitochondrial large protein complex that contains, at least, MIC60, DGS1, TOM40, TOM20 proteins, and petC/RISP. Post-translationally, the N-terminus is blocked. As to expression, expressed in roots, flowers, young cotyledons and leaves.

The protein resides in the mitochondrion outer membrane. Functionally, central component of the receptor complex responsible for the recognition and translocation of cytosolically synthesized mitochondrial preproteins. Together with TOM22 functions as the transit peptide receptor at the surface of the mitochondrion outer membrane and facilitates the movement of preproteins into the translocation pore. The sequence is that of Mitochondrial import receptor subunit TOM20-2 from Arabidopsis thaliana (Mouse-ear cress).